The following is a 301-amino-acid chain: Small ribosomal subunit biogenesis GTPase RsgA (301 aa).

The CP-type G domain maps to 63 to 224; it reads INALVRPPIA…IADTPGFSSY (162 aa). Residues 112–115 and 167–175 each bind GTP; these read SKAD and GQTGAGKST. The Zn(2+) site is built by cysteine 248, cysteine 253, histidine 255, and cysteine 261.

The protein belongs to the TRAFAC class YlqF/YawG GTPase family. RsgA subfamily. As to quaternary structure, monomer. Associates with 30S ribosomal subunit, binds 16S rRNA. Zn(2+) serves as cofactor.

The protein localises to the cytoplasm. Functionally, one of several proteins that assist in the late maturation steps of the functional core of the 30S ribosomal subunit. Helps release RbfA from mature subunits. May play a role in the assembly of ribosomal proteins into the subunit. Circularly permuted GTPase that catalyzes slow GTP hydrolysis, GTPase activity is stimulated by the 30S ribosomal subunit. This is Small ribosomal subunit biogenesis GTPase RsgA from Leuconostoc citreum (strain KM20).